We begin with the raw amino-acid sequence, 293 residues long: Signal recognition particle receptor FtsY (293 aa).

Residues 93 to 100 (GVNGAGKT), 175 to 179 (DTAGR), and 239 to 242 (TKLD) contribute to the GTP site.

Belongs to the GTP-binding SRP family. FtsY subfamily. In terms of assembly, part of the signal recognition particle protein translocation system, which is composed of SRP and FtsY. SRP is a ribonucleoprotein composed of Ffh and a 4.5S RNA molecule.

It is found in the cell inner membrane. Its subcellular location is the cytoplasm. It catalyses the reaction GTP + H2O = GDP + phosphate + H(+). Involved in targeting and insertion of nascent membrane proteins into the cytoplasmic membrane. Acts as a receptor for the complex formed by the signal recognition particle (SRP) and the ribosome-nascent chain (RNC). Interaction with SRP-RNC leads to the transfer of the RNC complex to the Sec translocase for insertion into the membrane, the hydrolysis of GTP by both Ffh and FtsY, and the dissociation of the SRP-FtsY complex into the individual components. The protein is Signal recognition particle receptor FtsY of Helicobacter pylori (strain J99 / ATCC 700824) (Campylobacter pylori J99).